A 270-amino-acid polypeptide reads, in one-letter code: Urease accessory protein UreD (270 aa).

Belongs to the UreD family. In terms of assembly, ureD, UreF and UreG form a complex that acts as a GTP-hydrolysis-dependent molecular chaperone, activating the urease apoprotein by helping to assemble the nickel containing metallocenter of UreC. The UreE protein probably delivers the nickel.

The protein localises to the cytoplasm. Required for maturation of urease via the functional incorporation of the urease nickel metallocenter. In Actinobacillus pleuropneumoniae serotype 5b (strain L20), this protein is Urease accessory protein UreD.